A 274-amino-acid chain; its full sequence is Large ribosomal subunit protein uL2 (274 aa).

Disordered regions lie at residues 35–60 (EPQHQKSGRNNNGHITTRHKGGGHKH) and 224–274 (VMNP…RRKK). Residues 50-60 (TTRHKGGGHKH) are compositionally biased toward basic residues. The segment covering 229-246 (DHPHGGGEGKTGEGRHAV) has biased composition (basic and acidic residues).

Belongs to the universal ribosomal protein uL2 family. Part of the 50S ribosomal subunit. Forms a bridge to the 30S subunit in the 70S ribosome.

One of the primary rRNA binding proteins. Required for association of the 30S and 50S subunits to form the 70S ribosome, for tRNA binding and peptide bond formation. It has been suggested to have peptidyltransferase activity; this is somewhat controversial. Makes several contacts with the 16S rRNA in the 70S ribosome. In Delftia acidovorans (strain DSM 14801 / SPH-1), this protein is Large ribosomal subunit protein uL2.